A 109-amino-acid polypeptide reads, in one-letter code: Large ribosomal subunit protein uL22 (109 aa).

It belongs to the universal ribosomal protein uL22 family. As to quaternary structure, part of the 50S ribosomal subunit.

Functionally, this protein binds specifically to 23S rRNA; its binding is stimulated by other ribosomal proteins, e.g. L4, L17, and L20. It is important during the early stages of 50S assembly. It makes multiple contacts with different domains of the 23S rRNA in the assembled 50S subunit and ribosome. In terms of biological role, the globular domain of the protein is located near the polypeptide exit tunnel on the outside of the subunit, while an extended beta-hairpin is found that lines the wall of the exit tunnel in the center of the 70S ribosome. This is Large ribosomal subunit protein uL22 from Polaromonas sp. (strain JS666 / ATCC BAA-500).